The primary structure comprises 59 residues: MAVPFRKTSKSAKNKRRSHLALVASNLVSCENCGSMIKPHRVCRECGFYKGKEVKSVQD.

It belongs to the bacterial ribosomal protein bL32 family.

The chain is Large ribosomal subunit protein bL32 from Mesoplasma florum (strain ATCC 33453 / NBRC 100688 / NCTC 11704 / L1) (Acholeplasma florum).